We begin with the raw amino-acid sequence, 123 residues long: Small ribosomal subunit protein uS12 (123 aa).

Residues 11-32 (PRQEKTYREKARHLGASPQKRG) are disordered. Asp-89 carries the 3-methylthioaspartic acid modification.

Belongs to the universal ribosomal protein uS12 family. Part of the 30S ribosomal subunit. Contacts proteins S8 and S17. May interact with IF1 in the 30S initiation complex.

Functionally, with S4 and S5 plays an important role in translational accuracy. In terms of biological role, interacts with and stabilizes bases of the 16S rRNA that are involved in tRNA selection in the A site and with the mRNA backbone. Located at the interface of the 30S and 50S subunits, it traverses the body of the 30S subunit contacting proteins on the other side and probably holding the rRNA structure together. The combined cluster of proteins S8, S12 and S17 appears to hold together the shoulder and platform of the 30S subunit. The sequence is that of Small ribosomal subunit protein uS12 from Methylocella silvestris (strain DSM 15510 / CIP 108128 / LMG 27833 / NCIMB 13906 / BL2).